The chain runs to 191 residues: NF-kappa-B inhibitor-interacting Ras-like protein 2 (191 aa).

Residues 1–191 (MGKSCKVVVC…KNKGSGSLDG (191 aa)) are small GTPase-like. Position 11 to 18 (11 to 18 (GQASVGKT)) interacts with GTP. The short motif at 35 to 43 (MIETQEDIY) is the Effector region element. GTP-binding positions include 61 to 65 (DTRGL) and 120 to 123 (NKCD). Residues 169–191 (TQPQSKSAFPLSRKNKGSGSLDG) are disordered.

It belongs to the small GTPase superfamily. Ras family. KappaB-Ras subfamily. As to quaternary structure, interacts with both NF-kappa-B inhibitor alpha (NFKBIA) and beta (NFKBIB) in vitro. However, it probably only interacts with NFKBIB in vivo. Interacts with GFOD1. In terms of tissue distribution, widely expressed.

The protein localises to the cytoplasm. Functionally, atypical Ras-like protein that acts as a potent regulator of NF-kappa-B activity by preventing the degradation of NF-kappa-B inhibitor beta (NFKBIB) by most signals, explaining why NFKBIB is more resistant to degradation. May act by blocking phosphorylation of NFKBIB and nuclear localization of p65/RELA NF-kappa-B subunit. It is unclear whether it acts as a GTPase. Both GTP- and GDP-bound forms block phosphorylation of NFKBIB. The chain is NF-kappa-B inhibitor-interacting Ras-like protein 2 (NKIRAS2) from Homo sapiens (Human).